Consider the following 251-residue polypeptide: Small ribosomal subunit protein uS2 (251 aa).

Belongs to the universal ribosomal protein uS2 family.

This Nitrosomonas eutropha (strain DSM 101675 / C91 / Nm57) protein is Small ribosomal subunit protein uS2.